A 146-amino-acid polypeptide reads, in one-letter code: Mu-like prophage FluMu G protein 1 (146 aa).

This sequence to phage Mu protein G.

This is Mu-like prophage FluMu G protein 1 from Haemophilus influenzae (strain ATCC 51907 / DSM 11121 / KW20 / Rd).